The primary structure comprises 265 residues: 4-hydroxy-tetrahydrodipicolinate reductase (265 aa).

Residues 7-12 (GASGRM), Asp33, 96-98 (GTT), and 120-123 (AANM) each bind NAD(+). Residue His153 is the Proton donor/acceptor of the active site. (S)-2,3,4,5-tetrahydrodipicolinate is bound at residue His154. Lys157 functions as the Proton donor in the catalytic mechanism. 163–164 (GT) lines the (S)-2,3,4,5-tetrahydrodipicolinate pocket.

The protein belongs to the DapB family.

It is found in the cytoplasm. The enzyme catalyses (S)-2,3,4,5-tetrahydrodipicolinate + NAD(+) + H2O = (2S,4S)-4-hydroxy-2,3,4,5-tetrahydrodipicolinate + NADH + H(+). It carries out the reaction (S)-2,3,4,5-tetrahydrodipicolinate + NADP(+) + H2O = (2S,4S)-4-hydroxy-2,3,4,5-tetrahydrodipicolinate + NADPH + H(+). It functions in the pathway amino-acid biosynthesis; L-lysine biosynthesis via DAP pathway; (S)-tetrahydrodipicolinate from L-aspartate: step 4/4. Its function is as follows. Catalyzes the conversion of 4-hydroxy-tetrahydrodipicolinate (HTPA) to tetrahydrodipicolinate. In Cupriavidus pinatubonensis (strain JMP 134 / LMG 1197) (Cupriavidus necator (strain JMP 134)), this protein is 4-hydroxy-tetrahydrodipicolinate reductase.